Consider the following 267-residue polypeptide: Protein PERCC1 (267 aa).

Disordered regions lie at residues 19–88, 142–163, and 247–267; these read HHPF…QLLR, SLED…RPGL, and ACPE…PAEA. The span at 28 to 50 shows a compositional bias: acidic residues; the sequence is EPPETSEEEEEEEEEEEEEEGEG. The segment covering 74-83 has biased composition (low complexity); that stretch reads PEGPGSPETP.

Its function is as follows. Plays a critical role in intestinal function. Acts by promoting the development of enteroendocrine cells (EECs) of the gastrointestinal tract and pancreas. It is thereby required for normal enteroendocrine peptide hormone secretion. This chain is Protein PERCC1, found in Homo sapiens (Human).